The primary structure comprises 369 residues: Cellular tumor antigen p53 (369 aa).

The interval 1–28 is transcription activation (acidic); the sequence is MAESQEFAELWERNLISTQEAGTCWELI. Residues 66-256 mediate DNA binding; it reads DYPGEHGFKL…KTEESNFRKD (191 aa). 4 residues coordinate Zn(2+): Cys140, His143, Cys202, and Cys206. The interaction with DNA stretch occupies residues 237-244; it reads RVCACPGR. A compositionally biased stretch (basic and acidic residues) spans 246 to 263; the sequence is RKTEESNFRKDQETKTLD. 2 disordered regions span residues 246-296 and 318-369; these read RKTE…SGSS and NDSL…SDSD. Polar residues predominate over residues 269 to 281; it reads NKRSLTKDSTSSV. Residues 270–289 carry the Bipartite nuclear localization signal motif; it reads KRSLTKDSTSSVPRPEGSKK. An oligomerization region spans residues 298-329; sequence EEIYTLQVRGKERYEMLKKINDSLELSDVVPP. The Nuclear export signal signature appears at 312-323; the sequence is EMLKKINDSLEL. Positions 342-365 are basic (repression of DNA-binding); sequence KGKKKDGQTPEPKRGKKLMVKDEK. The span at 346–369 shows a compositional bias: basic and acidic residues; the sequence is KDGQTPEPKRGKKLMVKDEKSDSD.

This sequence belongs to the p53 family. As to quaternary structure, binds DNA as a homotetramer. Zn(2+) serves as cofactor.

The protein localises to the cytoplasm. The protein resides in the nucleus. Functionally, multifunctional transcription factor that induces cell cycle arrest, DNA repair or apoptosis upon binding to its target DNA sequence. Acts as a tumor suppressor in many tumor types; induces growth arrest or apoptosis depending on the physiological circumstances and cell type. Negatively regulates cell division by controlling expression of a set of genes required for this process. One of the activated genes is an inhibitor of cyclin-dependent kinases. Apoptosis induction seems to be mediated either by stimulation of BAX and FAS antigen expression, or by repression of Bcl-2 expression. In Barbus barbus (Barbel), this protein is Cellular tumor antigen p53 (tp53).